The following is a 787-amino-acid chain: LPS-assembly protein LptD (787 aa).

A signal peptide spans 1–24 (MKKSFPTLLATLVWSALYSQHALA).

It belongs to the LptD family. Component of the lipopolysaccharide transport and assembly complex. Interacts with LptE and LptA.

The protein resides in the cell outer membrane. Together with LptE, is involved in the assembly of lipopolysaccharide (LPS) at the surface of the outer membrane. This is LPS-assembly protein LptD from Pectobacterium atrosepticum (strain SCRI 1043 / ATCC BAA-672) (Erwinia carotovora subsp. atroseptica).